The primary structure comprises 1096 residues: Carbamoyl phosphate synthase large chain (1096 aa).

The interval 1 to 402 (MPKRDDINSV…ALQKALRSLE (402 aa)) is carboxyphosphate synthetic domain. ATP-binding residues include Arg-129, Arg-169, Gly-175, Gly-176, Glu-208, Ile-210, Glu-215, Gly-241, Val-242, His-243, Gln-285, and Glu-299. The 196-residue stretch at 133-328 (KDLVIESGAD…IAKIAAKLAI (196 aa)) folds into the ATP-grasp 1 domain. The Mg(2+) site is built by Gln-285, Glu-299, and Asn-301. Residues Gln-285, Glu-299, and Asn-301 each contribute to the Mn(2+) site. Positions 403–547 (KRGSSFHWGP…YSSYDSETEI (145 aa)) are oligomerization domain. The tract at residues 548–950 (VPSDRRKVII…AFAKSQEAAF (403 aa)) is carbamoyl phosphate synthetic domain. The ATP-grasp 2 domain maps to 676–870 (SGILDTAGLV…LAKAASLVMV (195 aa)). The ATP site is built by Arg-712, Arg-754, Leu-756, Glu-761, Gly-786, Ile-787, His-788, Ser-789, Gln-829, and Glu-841. Residues Gln-829, Glu-841, and Asn-843 each contribute to the Mg(2+) site. The Mn(2+) site is built by Gln-829, Glu-841, and Asn-843. One can recognise an MGS-like domain in the interval 951–1095 (GGLPLSGTVF…QDYAIAREAR (145 aa)). The tract at residues 951-1096 (GGLPLSGTVF…DYAIAREARR (146 aa)) is allosteric domain.

Belongs to the CarB family. In terms of assembly, composed of two chains; the small (or glutamine) chain promotes the hydrolysis of glutamine to ammonia, which is used by the large (or ammonia) chain to synthesize carbamoyl phosphate. Tetramer of heterodimers (alpha,beta)4. It depends on Mg(2+) as a cofactor. Requires Mn(2+) as cofactor.

It carries out the reaction hydrogencarbonate + L-glutamine + 2 ATP + H2O = carbamoyl phosphate + L-glutamate + 2 ADP + phosphate + 2 H(+). It catalyses the reaction hydrogencarbonate + NH4(+) + 2 ATP = carbamoyl phosphate + 2 ADP + phosphate + 2 H(+). It participates in amino-acid biosynthesis; L-arginine biosynthesis; carbamoyl phosphate from bicarbonate: step 1/1. It functions in the pathway pyrimidine metabolism; UMP biosynthesis via de novo pathway; (S)-dihydroorotate from bicarbonate: step 1/3. Large subunit of the glutamine-dependent carbamoyl phosphate synthetase (CPSase). CPSase catalyzes the formation of carbamoyl phosphate from the ammonia moiety of glutamine, carbonate, and phosphate donated by ATP, constituting the first step of 2 biosynthetic pathways, one leading to arginine and/or urea and the other to pyrimidine nucleotides. The large subunit (synthetase) binds the substrates ammonia (free or transferred from glutamine from the small subunit), hydrogencarbonate and ATP and carries out an ATP-coupled ligase reaction, activating hydrogencarbonate by forming carboxy phosphate which reacts with ammonia to form carbamoyl phosphate. The protein is Carbamoyl phosphate synthase large chain of Clavibacter michiganensis subsp. michiganensis (strain NCPPB 382).